Here is a 383-residue protein sequence, read N- to C-terminus: Succinate--CoA ligase [ADP-forming] subunit beta (383 aa).

The 233-residue stretch at 9 to 241 (KEVLHKFNVS…YDEEVKEEIE (233 aa)) folds into the ATP-grasp domain. Residues K46, 53–55 (GRG), E99, S102, and E107 contribute to the ATP site. The Mg(2+) site is built by N196 and D210. Substrate contacts are provided by residues N261 and 318–320 (GIM).

It belongs to the succinate/malate CoA ligase beta subunit family. As to quaternary structure, heterotetramer of two alpha and two beta subunits. Mg(2+) serves as cofactor.

The enzyme catalyses succinate + ATP + CoA = succinyl-CoA + ADP + phosphate. It carries out the reaction GTP + succinate + CoA = succinyl-CoA + GDP + phosphate. It participates in carbohydrate metabolism; tricarboxylic acid cycle; succinate from succinyl-CoA (ligase route): step 1/1. Functionally, succinyl-CoA synthetase functions in the citric acid cycle (TCA), coupling the hydrolysis of succinyl-CoA to the synthesis of either ATP or GTP and thus represents the only step of substrate-level phosphorylation in the TCA. The beta subunit provides nucleotide specificity of the enzyme and binds the substrate succinate, while the binding sites for coenzyme A and phosphate are found in the alpha subunit. This is Succinate--CoA ligase [ADP-forming] subunit beta from Wolbachia sp. subsp. Drosophila simulans (strain wRi).